A 71-amino-acid chain; its full sequence is Small ribosomal subunit protein bS21 (71 aa).

Residues 48 to 59 (EKASLAKRHAKR) are compositionally biased toward basic residues. The disordered stretch occupies residues 48-71 (EKASLAKRHAKRNARENARNTRLY). Residues 60–71 (NARENARNTRLY) show a composition bias toward basic and acidic residues.

It belongs to the bacterial ribosomal protein bS21 family.

The protein is Small ribosomal subunit protein bS21 of Actinobacillus pleuropneumoniae serotype 5b (strain L20).